The following is a 361-amino-acid chain: Homeobox protein knotted-1-like 6 (361 aa).

The disordered stretch occupies residues 11-48 (VGASGVHGGHQHQHHHHPWGSSLSAIVAPPPPPQLQQQ). Basic residues predominate over residues 19-28 (GHQHQHHHHP). Positions 242 to 262 (ELKHHLLKKYSGYLSSLKQEL) constitute an ELK domain. A DNA-binding region (homeobox; TALE-type) is located at residues 263-326 (SKKKKKGKLP…NQRKRHWKPS (64 aa)).

It belongs to the TALE/KNOX homeobox family. In terms of assembly, interacts with FTIP7. Expressed predominantly in shoot apices. Also found to a lesser extent in glumes.

It localises to the nucleus. The protein localises to the cytoplasm. Its function is as follows. Transcription factor that regulates genes involved in development. May be involved in shoot formation during embryogenesis. Overexpression in transgenic plants causes altered leaf morphology. Regulates anther dehiscence via direct repression of the auxin biosynthetic gene YUCCA4. Binds to the DNA sequence 5'-TGAC-3' in the promoter of the YUCCA4 gene and represses its activity during anther development. Reduction of auxin levels at late stage of anther development, after meiosis of microspore mother cells, is necessary for normal anther dehiscence and seed setting. The polypeptide is Homeobox protein knotted-1-like 6 (OSH1) (Oryza sativa subsp. japonica (Rice)).